Consider the following 172-residue polypeptide: ATP-dependent kinase-like protein notR' (172 aa).

Belongs to the YFH7 family.

Its function is as follows. ATP-dependent kinase-like protein; part of the gene cluster that mediates the biosynthesis of notoamide, a fungal indole alkaloid that belongs to a family of natural products containing a characteristic bicyclo[2.2.2]diazaoctane core. The first step of notoamide biosynthesis involves coupling of L-proline and L-tryptophan by the bimodular NRPS notE', to produce cyclo-L-tryptophan-L-proline called brevianamide F. The reverse prenyltransferase notF' then acts as a deoxybrevianamide E synthase and converts brevianamide F to deoxybrevianamide E via reverse prenylation at C-2 of the indole ring leading to the bicyclo[2.2.2]diazaoctane core. Deoxybrevianamide E is further hydroxylated at C-6 of the indole ring, likely catalyzed by the cytochrome P450 monooxygenase notG', to yield 6-hydroxy-deoxybrevianamide E. 6-hydroxy-deoxybrevianamide E is a specific substrate of the prenyltransferase notC' for normal prenylation at C-7 to produce 6-hydroxy-7-prenyl-deoxybrevianamide, also called notoamide S. As the proposed pivotal branching point in notoamide biosynthesis, notoamide S can be diverted to notoamide E through an oxidative pyran ring closure putatively catalyzed by either notH' cytochrome P450 monooxygenase or the notD' FAD-linked oxidoreductase. This step would be followed by an indole 2,3-epoxidation-initiated pinacol-like rearrangement catalyzed by the notB' FAD-dependent monooxygenase leading to the formation of notoamide C and notoamide D. On the other hand notoamide S is converted to notoamide T by notH' (or notD'), a bifunctional oxidase that also functions as the intramolecular Diels-Alderase responsible for generation of (-)-notoamide T. To generate antipodal (+)-notoaminide T, notH (or notD) in Aspergillus strain MF297-2 is expected to catalyze a Diels-Alder reaction leading to the opposite stereochemistry. The remaining oxidoreductase notD' (or notH') likely catalyzes the oxidative pyran ring formation to yield (-)-stephacidin A. The FAD-dependent monooxygenase notI' is highly similar to notB' and is predicted to catalyze a similar conversion from (-)-stephacidin A to (+)-notoamide B via the 2,3-epoxidation of (-)-stephacidin A followed by a pinacol-type rearrangement. Finally, it remains unclear which enzyme could be responsible for the final hydroxylation steps leading to notoamide A and sclerotiamide. The function of notQ' in the notoamide biosynthesis has not been determined yet. The chain is ATP-dependent kinase-like protein notR' from Aspergillus versicolor.